We begin with the raw amino-acid sequence, 434 residues long: UDP-N-acetylmuramate--L-alanine ligase (434 aa).

Position 110–116 (110–116 (GAHGKTS)) interacts with ATP.

It belongs to the MurCDEF family.

Its subcellular location is the cytoplasm. It carries out the reaction UDP-N-acetyl-alpha-D-muramate + L-alanine + ATP = UDP-N-acetyl-alpha-D-muramoyl-L-alanine + ADP + phosphate + H(+). It functions in the pathway cell wall biogenesis; peptidoglycan biosynthesis. Its function is as follows. Cell wall formation. This Limosilactobacillus reuteri (strain DSM 20016) (Lactobacillus reuteri) protein is UDP-N-acetylmuramate--L-alanine ligase.